Reading from the N-terminus, the 232-residue chain is MTRPQAILTDIEGTTSSISFVKDVLFPYARRAMPAYVRDHGNHPQVRHWLNQVADEIGEDVPDEVLITTLQTWIDEDRKHTALKALQGLIWGDGYKTADFTAHIYADAAIQLKAWHAAGIPLYVYSSGSVPAQKLFFAHSDAGDLSGLITDWFDTEVGPKRESASYRRIAERIGVPGPEILFLSDVIEELDAAKRAGMRTALLDRLDDYPTPRSADEVGSHQRVESFSQLVL.

The protein belongs to the HAD-like hydrolase superfamily. MasA/MtnC family. Monomer. Mg(2+) serves as cofactor.

The catalysed reaction is 5-methylsulfanyl-2,3-dioxopentyl phosphate + H2O = 1,2-dihydroxy-5-(methylsulfanyl)pent-1-en-3-one + phosphate. It participates in amino-acid biosynthesis; L-methionine biosynthesis via salvage pathway; L-methionine from S-methyl-5-thio-alpha-D-ribose 1-phosphate: step 3/6. It functions in the pathway amino-acid biosynthesis; L-methionine biosynthesis via salvage pathway; L-methionine from S-methyl-5-thio-alpha-D-ribose 1-phosphate: step 4/6. Its function is as follows. Bifunctional enzyme that catalyzes the enolization of 2,3-diketo-5-methylthiopentyl-1-phosphate (DK-MTP-1-P) into the intermediate 2-hydroxy-3-keto-5-methylthiopentenyl-1-phosphate (HK-MTPenyl-1-P), which is then dephosphorylated to form the acireductone 1,2-dihydroxy-3-keto-5-methylthiopentene (DHK-MTPene). This is Enolase-phosphatase E1 from Xanthomonas axonopodis pv. citri (strain 306).